A 167-amino-acid chain; its full sequence is SsrA-binding protein (167 aa).

The tract at residues 139 to 167 is disordered; that stretch reads QAHDKRHAEKEREWQRDKQRIMRAHNRNA. Positions 144 to 158 are enriched in basic and acidic residues; it reads RHAEKEREWQRDKQR.

This sequence belongs to the SmpB family.

It localises to the cytoplasm. Functionally, required for rescue of stalled ribosomes mediated by trans-translation. Binds to transfer-messenger RNA (tmRNA), required for stable association of tmRNA with ribosomes. tmRNA and SmpB together mimic tRNA shape, replacing the anticodon stem-loop with SmpB. tmRNA is encoded by the ssrA gene; the 2 termini fold to resemble tRNA(Ala) and it encodes a 'tag peptide', a short internal open reading frame. During trans-translation Ala-aminoacylated tmRNA acts like a tRNA, entering the A-site of stalled ribosomes, displacing the stalled mRNA. The ribosome then switches to translate the ORF on the tmRNA; the nascent peptide is terminated with the 'tag peptide' encoded by the tmRNA and targeted for degradation. The ribosome is freed to recommence translation, which seems to be the essential function of trans-translation. The protein is SsrA-binding protein of Xylella fastidiosa (strain M12).